Here is a 557-residue protein sequence, read N- to C-terminus: MAQSRVTDFYACRRPGLTTPRAKSICLTPSPGGLVAPAFTRSSSRKRARPPAEPGSDQPAPLARRRLRLPGLDSCPSSLPEPSSPAEPSPPADPSPPADPGSPVCPSPVKRTKSTTVYVGQQPGKIPSEDSVSELQSCLRRARKLGAQARALRARVQENAVEPSTPDAKVPTEQPCVEKAPAYQRFHALAQPGLPGLVLPYKYQVLVEMFRSMDTIVSMLHNRSETVTFAKVKQGVQEMMRKRFEERNVGQIKTVYPTSYRFRQECNVPTFKDSIKRSDYQLTIEPLLGQEAGGATQLTATCLLQRRQVFRQNLVERVKEQHKVFLASLNPPMAVPDDQLTRWHPRFNVDEVPDIEPAELPQPPVTEKLTTAQEVLARARSLMTPKMEKALSNLALRSAEPGSPGTSTPPLPATPPATPPAASPSALKGVSQALLERIRAKEVQKQLARMTRCPEQELRLQRLERLPELARVLRNVFVSERKPALTMEVVCARMVDSCQTALSPGEMEKHLVLLAELLPDWLSLHRIRTDTYVKLDKAVDLAGLTARLAHHVHAEGL.

Positions 1-25 (MAQSRVTDFYACRRPGLTTPRAKSI) match the PIP-box K+4 motif motif. The disordered stretch occupies residues 20-113 (PRAKSICLTP…VCPSPVKRTK (94 aa)). A Phosphothreonine; by MAPK8 modification is found at T28. The residue at position 30 (S30) is a Phosphoserine. The short motif at 65–67 (RRL) is the Cyclin-binding motif element. Positions 69–81 (LPGLDSCPSSLPE) are enriched in low complexity. Residues 82-106 (PSSPAEPSPPADPSPPADPGSPVCP) are compositionally biased toward pro residues. S107 bears the Phosphoserine; by MAPK8 mark. An interaction with GMNN region spans residues 163–203 (PSTPDAKVPTEQPCVEKAPAYQRFHALAQPGLPGLVLPYKY). Phosphoserine is present on S392. Positions 397-427 (RSAEPGSPGTSTPPLPATPPATPPAASPSAL) are disordered. The span at 407 to 422 (STPPLPATPPATPPAA) shows a compositional bias: pro residues. Residues 463 to 557 (LERLPELARV…LAHHVHAEGL (95 aa)) form an interaction with LRWD1 region.

This sequence belongs to the Cdt1 family. In terms of assembly, interacts with GMNN; the interaction inhibits the binding of the MCM complex to origins of replication. Interacts with MCM6. Interacts with CDC6; are mutually dependent on one another for loading MCM complexes onto chromatin. Interacts with PCNA. Interacts with LRWD1 during G1 phase and during mitosis. Interacts with NDC80 subunit of the NDC80 complex; leading to kinetochore localization. Interacts with KAT7. Interacts with ubiquitin-binding protein FAF1; the interaction is likely to promote CDT1 degradation. In terms of processing, two independent E3 ubiquitin ligase complexes, SCF(SKP2) and the DCX(DTL) complex, mediated CDT1 degradation in S phase. Ubiquitinated by the DCX(DTL) complex, in response to DNA damage, leading to its degradation. Ubiquitination by the DCX(DTL) complex is necessary to ensure proper cell cycle regulation and is PCNA-dependent: interacts with PCNA via its PIP-box, while the presence of the containing the 'K+4' motif in the PIP box, recruit the DCX(DTL) complex, leading to its degradation. Phosphorylation at Thr-28 by CDK2 targets CDT1 for ubiquitynation by SCF(SKP2) E3 ubiquitin ligase and subsequent degradation. The interaction with GMNN protects it against ubiquitination. Deubiquitinated by USP37. Ubiquitinated and degraded by the SCF(FBXO31) complex during the G2 phase to prevent re-replication. Phosphorylation by cyclin A-dependent kinases at Thr-28 targets CDT1 for ubiquitynation by SCF(SKP2) E3 ubiquitin ligase and subsequent degradation. Phosphorylated at Thr-28 by MAPK8/JNK1, which blocks replication licensing in response to stress. Binding to GMNN is not affected by phosphorylation.

Its subcellular location is the nucleus. The protein localises to the chromosome. It localises to the centromere. The protein resides in the kinetochore. In terms of biological role, required for both DNA replication and mitosis. DNA replication licensing factor, required for pre-replication complex assembly. Cooperates with CDC6 and the origin recognition complex (ORC) during G1 phase of the cell cycle to promote the loading of the mini-chromosome maintenance (MCM) complex onto DNA to generate pre-replication complexes (pre-RC). Required also for mitosis by promoting stable kinetochore-microtubule attachments. Potential oncogene. This Mus musculus (Mouse) protein is DNA replication factor Cdt1.